Here is a 609-residue protein sequence, read N- to C-terminus: UvrABC system protein C (609 aa).

The region spanning 16–94 is the GIY-YIG domain; that stretch reads SSAGVYRMYD…IKQYMPKYNV (79 aa). The region spanning 203–238 is the UVR domain; it reads QQVISALVDKMELAAERQAYEQAARFRDQIMALRKV.

The protein belongs to the UvrC family. In terms of assembly, interacts with UvrB in an incision complex.

It is found in the cytoplasm. Functionally, the UvrABC repair system catalyzes the recognition and processing of DNA lesions. UvrC both incises the 5' and 3' sides of the lesion. The N-terminal half is responsible for the 3' incision and the C-terminal half is responsible for the 5' incision. The sequence is that of UvrABC system protein C from Shewanella baltica (strain OS185).